A 513-amino-acid chain; its full sequence is Sphingolipid C9-methyltransferase 1 (513 aa).

2 helical membrane passes run 63–83 (FLVAALLGIPQWLSWKLGGGL) and 85–105 (TAIFLSIFTTIPVLAVIWTVM). S-adenosyl-L-methionine is bound by residues 228 to 229 (YT), 265 to 273 (LLDIGCGWG), 291 to 296 (TLARNQ), and 321 to 322 (YR).

This sequence belongs to the CFA/CMAS family.

It localises to the membrane. The enzyme catalyses a (4E,8E)-4-sphinga-4,8-dienine ceramide + S-adenosyl-L-methionine = a 9-methyl-(4E,8E)-sphinga-4,8-dienine ceramide + S-adenosyl-L-homocysteine + H(+). It functions in the pathway lipid metabolism; sphingolipid metabolism. Catalyzes methylation of the sphingoid base component of glucosylceramides (GluCers) at the C9-position. Sphingolipid C9-methylation requires 4,8-desaturated ceramides as substrates. Glucosylceramides play important roles in the growth, differentiation and pathogenicity. The methyl group at the C9-position distinguishes fungal glucosylceramides from those of plants and animals, and may thus play a role in host-pathogen interactions enabling the host to recognize the fungal attack and initiate specific defense responses. However, C-9 methylation of GlcCers is not essential for the sensitivity of F.graminearum to plant defensins MsDef1 and RsAFP2. The protein is Sphingolipid C9-methyltransferase 1 of Gibberella zeae (strain ATCC MYA-4620 / CBS 123657 / FGSC 9075 / NRRL 31084 / PH-1) (Wheat head blight fungus).